Reading from the N-terminus, the 120-residue chain is Immunoglobulin kappa variable 2D-26 (120 aa).

The N-terminal stretch at 1–20 is a signal peptide; it reads MRLPAQLLGLLMLWVPGSSA. A framework-1 region spans residues 21 to 43; sequence EIVMTQTPLSLSITPGEQASMSC. The Ig-like domain occupies 21–120; sequence EIVMTQTPLS…YYCMQDAQDP (100 aa). Cys-43 and Cys-113 are disulfide-bonded. A complementarity-determining-1 region spans residues 44-59; it reads RSSQSLLHSDGYTYLY. Positions 60 to 74 are framework-2; sequence WFLQKARPVSTLLIY. Positions 75 to 81 are complementarity-determining-2; sequence EVSNRFS. The tract at residues 82–113 is framework-3; that stretch reads GVPDRFSGSGSGTDFTLKISRVEAEDFGVYYC. Residues 114–120 form a complementarity-determining-3 region; it reads MQDAQDP.

Immunoglobulins are composed of two identical heavy chains and two identical light chains; disulfide-linked.

The protein localises to the secreted. It is found in the cell membrane. Functionally, v region of the variable domain of immunoglobulin light chains that participates in the antigen recognition. Immunoglobulins, also known as antibodies, are membrane-bound or secreted glycoproteins produced by B lymphocytes. In the recognition phase of humoral immunity, the membrane-bound immunoglobulins serve as receptors which, upon binding of a specific antigen, trigger the clonal expansion and differentiation of B lymphocytes into immunoglobulins-secreting plasma cells. Secreted immunoglobulins mediate the effector phase of humoral immunity, which results in the elimination of bound antigens. The antigen binding site is formed by the variable domain of one heavy chain, together with that of its associated light chain. Thus, each immunoglobulin has two antigen binding sites with remarkable affinity for a particular antigen. The variable domains are assembled by a process called V-(D)-J rearrangement and can then be subjected to somatic hypermutations which, after exposure to antigen and selection, allow affinity maturation for a particular antigen. This chain is Immunoglobulin kappa variable 2D-26, found in Homo sapiens (Human).